A 425-amino-acid polypeptide reads, in one-letter code: Trigger factor (425 aa).

One can recognise a PPIase FKBP-type domain in the interval 163 to 248 (GDTAVIDFEG…VHEIKTKELP (86 aa)).

It belongs to the FKBP-type PPIase family. Tig subfamily.

It localises to the cytoplasm. The catalysed reaction is [protein]-peptidylproline (omega=180) = [protein]-peptidylproline (omega=0). In terms of biological role, involved in protein export. Acts as a chaperone by maintaining the newly synthesized protein in an open conformation. Functions as a peptidyl-prolyl cis-trans isomerase. The chain is Trigger factor from Bacillus cereus (strain Q1).